The chain runs to 304 residues: Acetylxylan esterase A (304 aa).

A signal peptide spans 1 to 19; it reads MVKLQYLLSILLYAYSCTA. The Charge relay system role is filled by S147. N-linked (GlcNAc...) asparagine glycosylation occurs at N189.

This sequence belongs to the carbohydrate esterase 1 (CE1) family. AxeA subfamily. In terms of assembly, monomer.

It localises to the secreted. It catalyses the reaction Deacetylation of xylans and xylo-oligosaccharides.. The protein operates within glycan degradation; xylan degradation. Its function is as follows. Acetylxylan esterase involved in the hydrolysis of xylan, a major structural heterogeneous polysaccharide found in plant biomass representing the second most abundant polysaccharide in the biosphere, after cellulose. Degrades acetylated xylans by cleaving acetyl side groups from the hetero-xylan backbone. This is Acetylxylan esterase A (axeA) from Emericella nidulans (strain FGSC A4 / ATCC 38163 / CBS 112.46 / NRRL 194 / M139) (Aspergillus nidulans).